The following is a 336-amino-acid chain: Putative ataxin-3 homolog (336 aa).

Residues 10–193 enclose the Josephin domain; sequence GGLLYHEVQE…KECPMATEGS (184 aa). Residue cysteine 23 is the Nucleophile of the active site. The Proton acceptor role is filled by histidine 132. The active site involves asparagine 147. The UIM domain occupies 244–263; sequence QEEADLNAAIAASLMDTGGP. Residues 281 to 336 form a disordered region; the sequence is IESTSGEMSKDGNLEEQGANKSETSEPNSDNIESASGSNPKQNTTSLEGKESIKED. Residues 299-327 show a composition bias toward polar residues; that stretch reads ANKSETSEPNSDNIESASGSNPKQNTTSL.

The protein resides in the nucleus. It catalyses the reaction Thiol-dependent hydrolysis of ester, thioester, amide, peptide and isopeptide bonds formed by the C-terminal Gly of ubiquitin (a 76-residue protein attached to proteins as an intracellular targeting signal).. In terms of biological role, interacts with key regulators of transcription and represses transcription. Acts as a histone-binding protein that regulates transcription. Acts as a deubiquitinating enzyme. In Oryza sativa subsp. japonica (Rice), this protein is Putative ataxin-3 homolog.